Here is a 203-residue protein sequence, read N- to C-terminus: Small ribosomal subunit protein uS3 (203 aa).

The protein belongs to the universal ribosomal protein uS3 family. As to quaternary structure, part of the 30S ribosomal subunit. Forms a tight complex with proteins S10 and S14.

Its function is as follows. Binds the lower part of the 30S subunit head. Binds mRNA in the 70S ribosome, positioning it for translation. In Carsonella ruddii (strain PV), this protein is Small ribosomal subunit protein uS3.